We begin with the raw amino-acid sequence, 1415 residues long: DNA-directed RNA polymerase subunit beta' (1415 aa).

Cys71, Cys73, Cys86, and Cys89 together coordinate Zn(2+). The Mg(2+) site is built by Asp461, Asp463, and Asp465. Cys815, Cys889, Cys896, and Cys899 together coordinate Zn(2+).

Belongs to the RNA polymerase beta' chain family. The RNAP catalytic core consists of 2 alpha, 1 beta, 1 beta' and 1 omega subunit. When a sigma factor is associated with the core the holoenzyme is formed, which can initiate transcription. It depends on Mg(2+) as a cofactor. The cofactor is Zn(2+).

The catalysed reaction is RNA(n) + a ribonucleoside 5'-triphosphate = RNA(n+1) + diphosphate. DNA-dependent RNA polymerase catalyzes the transcription of DNA into RNA using the four ribonucleoside triphosphates as substrates. This is DNA-directed RNA polymerase subunit beta' from Haemophilus influenzae (strain ATCC 51907 / DSM 11121 / KW20 / Rd).